The sequence spans 416 residues: Lipid phosphate phosphatase delta (416 aa).

Transmembrane regions (helical) follow at residues 72–92 (FFSG…LPLL) and 104–124 (MTLL…VVSA). A phosphatase sequence motif I region spans residues 119–127 (KDVVSAPRP). Positions 151–154 (PSSH) are phosphatase sequence motif II. H154 serves as the catalytic Proton donor. A helical transmembrane segment spans residues 178-198 (VSIQYYGFALACLLVALIAFG). The segment at 198–209 (GRVYLGMHSVVD) is phosphatase sequence motif III. H205 (nucleophile) is an active-site residue. The next 5 membrane-spanning stretches (helical) occupy residues 207-227 (VVDI…WLTV), 241-261 (VSSF…TPEH), 266-286 (YEYH…VQQT), 302-322 (ELPI…ILLV), and 393-413 (FFQY…LFSY).

It belongs to the type 2 lipid phosphate phosphatase family.

The protein resides in the endoplasmic reticulum membrane. In terms of biological role, functions as a sphingoid long-chain base phosphate (LCBP) phosphatase. May play a role in the regulation of LCBP levels and be involved in stomatal responses through LCBP-mediated ABA signaling. This chain is Lipid phosphate phosphatase delta (LPPD), found in Arabidopsis thaliana (Mouse-ear cress).